Here is a 499-residue protein sequence, read N- to C-terminus: MMVAWWSLFLYGLQVAAPALAATPADWRSQSIYFLLTDRFARTDGSTTATCNTADQKYCGGTWQGIIDKLDYIQGMGFTAIWITPVTAQLPQTTAYGDAYHGYWQQDIYSLNENYGTADDLKALSSALHERGMYLMVDVVANHMGYDGAGSSVDYSVFKPFSSQDYFHPFCFIQNYEDQTQVEDCWLGDNTVSLPDLDTTKDVVKNEWYDWVGSLVSNYSIDGLRIDTVKHVQKDFWPGYNKAAGVYCIGEVLDGDPAYTCPYQNVMDGVLNYPIYYPLLNAFKSTSGSMDDLYNMINTVKSDCPDSTLLGTFVENHDNPRFASYTNDIALAKNVAAFIILNDGIPIIYAGQEQHYAGGNDPANREATWLSGYPTDSELYKLIASRNAIRNYAISKDTGFVTYKNWPIYKDDTTIPMRKGTDGSQIVTILSNKGASGDSYTLSLSGAGYTAGQQLTEVIGCTTVTVGSDGNVPVPMAGGLPRVLYPTEKLAGSKICSSS.

Residues 1–21 form the signal peptide; sequence MMVAWWSLFLYGLQVAAPALA. A disulfide bridge connects residues Cys-51 and Cys-59. The substrate site is built by Gln-56 and Trp-104. Residue Asn-142 coordinates Ca(2+). Substrate is bound at residue His-143. Cys-171 and Cys-185 are oxidised to a cystine. Ca(2+) is bound by residues Glu-183 and Asp-196. Asn-218 carries an N-linked (GlcNAc...) asparagine glycan. Position 225 (Arg-225) interacts with substrate. Residues Asp-227, His-231, and Glu-251 each contribute to the Ca(2+) site. Catalysis depends on Asp-227, which acts as the Nucleophile. Residue 230–231 participates in substrate binding; that stretch reads KH. Glu-251 serves as the catalytic Proton donor. Substrate is bound at residue Gly-255. The cysteines at positions 261 and 304 are disulfide-linked. Residues Asp-318 and Arg-365 each coordinate substrate. An intrachain disulfide couples Cys-461 to Cys-496.

The protein belongs to the glycosyl hydrolase 13 family. Ca(2+) serves as cofactor.

The enzyme catalyses Endohydrolysis of (1-&gt;4)-alpha-D-glucosidic linkages in polysaccharides containing three or more (1-&gt;4)-alpha-linked D-glucose units.. In Aspergillus awamori (Black koji mold), this protein is Alpha-amylase B (amyB).